Here is a 134-residue protein sequence, read N- to C-terminus: Small ribosomal subunit protein uS11 (134 aa).

The tract at residues 114–134 (DVTPVPSDSTRRKGGRRGRRL) is disordered. The span at 125-134 (RKGGRRGRRL) shows a compositional bias: basic residues.

This sequence belongs to the universal ribosomal protein uS11 family.

This chain is Small ribosomal subunit protein uS11 (RPS14), found in Candida albicans (Yeast).